A 468-amino-acid chain; its full sequence is 3-isopropylmalate dehydratase large subunit (468 aa).

Residues cysteine 347, cysteine 407, and cysteine 410 each coordinate [4Fe-4S] cluster.

This sequence belongs to the aconitase/IPM isomerase family. LeuC type 1 subfamily. As to quaternary structure, heterodimer of LeuC and LeuD. It depends on [4Fe-4S] cluster as a cofactor.

It carries out the reaction (2R,3S)-3-isopropylmalate = (2S)-2-isopropylmalate. It functions in the pathway amino-acid biosynthesis; L-leucine biosynthesis; L-leucine from 3-methyl-2-oxobutanoate: step 2/4. Its function is as follows. Catalyzes the isomerization between 2-isopropylmalate and 3-isopropylmalate, via the formation of 2-isopropylmaleate. The polypeptide is 3-isopropylmalate dehydratase large subunit (Campylobacter jejuni subsp. jejuni serotype O:6 (strain 81116 / NCTC 11828)).